The primary structure comprises 101 residues: Large ribosomal subunit protein uL24 (101 aa).

Belongs to the universal ribosomal protein uL24 family. As to quaternary structure, part of the 50S ribosomal subunit.

Functionally, one of two assembly initiator proteins, it binds directly to the 5'-end of the 23S rRNA, where it nucleates assembly of the 50S subunit. In terms of biological role, one of the proteins that surrounds the polypeptide exit tunnel on the outside of the subunit. The chain is Large ribosomal subunit protein uL24 from Jannaschia sp. (strain CCS1).